The sequence spans 272 residues: Putative pyruvate, phosphate dikinase regulatory protein 2 (272 aa).

154–161 (GVSRTSKT) is a binding site for ADP.

Belongs to the pyruvate, phosphate/water dikinase regulatory protein family. PDRP subfamily.

It catalyses the reaction N(tele)-phospho-L-histidyl/L-threonyl-[pyruvate, phosphate dikinase] + ADP = N(tele)-phospho-L-histidyl/O-phospho-L-threonyl-[pyruvate, phosphate dikinase] + AMP + H(+). It carries out the reaction N(tele)-phospho-L-histidyl/O-phospho-L-threonyl-[pyruvate, phosphate dikinase] + phosphate + H(+) = N(tele)-phospho-L-histidyl/L-threonyl-[pyruvate, phosphate dikinase] + diphosphate. Bifunctional serine/threonine kinase and phosphorylase involved in the regulation of the pyruvate, phosphate dikinase (PPDK) by catalyzing its phosphorylation/dephosphorylation. In Staphylococcus epidermidis (strain ATCC 35984 / DSM 28319 / BCRC 17069 / CCUG 31568 / BM 3577 / RP62A), this protein is Putative pyruvate, phosphate dikinase regulatory protein 2.